The chain runs to 389 residues: Succinate--CoA ligase [ADP-forming] subunit beta (389 aa).

ATP is bound by residues lysine 46, 53 to 55 (GRG), glutamate 99, cysteine 102, and glutamate 107. Mg(2+) contacts are provided by asparagine 199 and aspartate 213. Residues asparagine 264 and 321 to 323 (GIV) contribute to the substrate site.

The protein belongs to the succinate/malate CoA ligase beta subunit family. As to quaternary structure, heterotetramer of two alpha and two beta subunits. Mg(2+) serves as cofactor.

The catalysed reaction is succinate + ATP + CoA = succinyl-CoA + ADP + phosphate. It carries out the reaction GTP + succinate + CoA = succinyl-CoA + GDP + phosphate. The protein operates within carbohydrate metabolism; tricarboxylic acid cycle; succinate from succinyl-CoA (ligase route): step 1/1. In terms of biological role, succinyl-CoA synthetase functions in the citric acid cycle (TCA), coupling the hydrolysis of succinyl-CoA to the synthesis of either ATP or GTP and thus represents the only step of substrate-level phosphorylation in the TCA. The beta subunit provides nucleotide specificity of the enzyme and binds the substrate succinate, while the binding sites for coenzyme A and phosphate are found in the alpha subunit. In Haemophilus influenzae (strain 86-028NP), this protein is Succinate--CoA ligase [ADP-forming] subunit beta.